Here is a 140-residue protein sequence, read N- to C-terminus: Translation initiation factor 2 subunit beta (140 aa).

It belongs to the eIF-2-beta/eIF-5 family. Heterotrimer composed of an alpha, a beta and a gamma chain.

EIF-2 functions in the early steps of protein synthesis by forming a ternary complex with GTP and initiator tRNA. This Pyrococcus furiosus (strain ATCC 43587 / DSM 3638 / JCM 8422 / Vc1) protein is Translation initiation factor 2 subunit beta.